The following is a 54-amino-acid chain: MKLLTHTCHYCSFSFFTRKFDVFGAITKKDTPVVFCPACGNQSLSVSHIEEEII.

This sequence belongs to the phi29likevirus gp16.6 family.

This is Gene product 16.6 (16.6) from Bacillus subtilis (Bacteriophage phi-15).